A 556-amino-acid polypeptide reads, in one-letter code: MKTDIEIAQSVALKPIAEIVEQVGIGFDDIELYGKYKAKLSFDKIEAVRSQKVGKLILVTAINPTPAGEGKSTMSIGLADALNKIGKKTMIALREPSLGPVMGIKGGAAGGGYAQVLPMEDINLHFTGDMHAITTANNALSALLDNHIHQGNELDIDQRRVIWKRVVDLNDRALRQVIVGLGSPVNGIPREDGFDITVASEIMAILCLATDLSDLKKRLSNIVVAYSRDRKPIYVKDLKIEGALTLILKDAIKPNLVQTIYGTPALVHGGPFANIAHGCNSVLATSTALRLADYVVTEAGFGADLGAEKFLDIKTPNLPTSPDAIVIVATLRALKMHGGVSKEDLSQENVEAVKRGFTNLERHVNNMRQYGVPVVVAINQFTADTESEIATLKTLCSNIDVAVELASVWEDGADGGLELAQTVANVIETQSSNYKRLYNDADTIEEKIKKIVTKIYGGNKVHFGPKAQIQLKEFSDNGWDKMPICMAKTQYSFSDNPNLLGAPTDFDITVREFVPKTGAGFIVALTGDVLTMPGLPKKPAALNMDVLEDGTAIGLF.

65–72 (TPAGEGKS) serves as a coordination point for ATP.

The protein belongs to the formate--tetrahydrofolate ligase family.

The catalysed reaction is (6S)-5,6,7,8-tetrahydrofolate + formate + ATP = (6R)-10-formyltetrahydrofolate + ADP + phosphate. It functions in the pathway one-carbon metabolism; tetrahydrofolate interconversion. In Streptococcus agalactiae serotype Ia (strain ATCC 27591 / A909 / CDC SS700), this protein is Formate--tetrahydrofolate ligase.